We begin with the raw amino-acid sequence, 272 residues long: Dioscorin DB3L (272 aa).

The signal sequence occupies residues 1 to 25; sequence MSSSTLFHLFLLSSLLFSCLSNARP. The region spanning 28 to 263 is the Alpha-carbonic anhydrase domain; it reads DDFSYIEGSP…LKFRTIFFYP (236 aa). Residues C53 and C213 are joined by a disulfide bond.

The protein belongs to the alpha-class carbonic anhydrase family. Homodimer; disulfide-linked. In terms of processing, not glycosylated. In terms of tissue distribution, expressed in tuber (at protein level).

Its activity is regulated as follows. Loss of hemagglutinating activity by EDTA treatment. The activity is fully recovered by the addition of 5 mM Ca(2+) ions, but not with Mg(2+) and Mn 2(+). Hemagglutination activity is inhibited by maltose and its derivatives, with maltopentaose and maltohexaose being the best inhibitors followed by maltose and iso maltose. Not inhibited by glycoproteins. Maltose-binding lectin. No affinity is detected toward glucose. Has hemagglutinating activity against rabbit erythrocytes at 3.9 ug/ml. No carbonate dehydratase or trypsin inhibitor activity detected by measuring the hydrolysis of 4-nitrophenyl acetate or the inhibition of bovine trypsin-catalyzed hydrolysis of N-benzoyl-L-arginine ethyl ester, respectively. This Dioscorea polystachya (Chinese yam) protein is Dioscorin DB3L.